We begin with the raw amino-acid sequence, 335 residues long: DNA-directed RNA polymerase subunit alpha (335 aa).

The segment at 1–231 is alpha N-terminal domain (alpha-NTD); it reads MVREKVTVST…DLFIPFLHME (231 aa). The alpha C-terminal domain (alpha-CTD) stretch occupies residues 262–335; sequence KKKLSLESIF…FALDLPKNLN (74 aa).

Belongs to the RNA polymerase alpha chain family. As to quaternary structure, in plastids the minimal PEP RNA polymerase catalytic core is composed of four subunits: alpha, beta, beta', and beta''. When a (nuclear-encoded) sigma factor is associated with the core the holoenzyme is formed, which can initiate transcription.

Its subcellular location is the plastid. The enzyme catalyses RNA(n) + a ribonucleoside 5'-triphosphate = RNA(n+1) + diphosphate. Its function is as follows. DNA-dependent RNA polymerase catalyzes the transcription of DNA into RNA using the four ribonucleoside triphosphates as substrates. The sequence is that of DNA-directed RNA polymerase subunit alpha from Cuscuta reflexa (Southern Asian dodder).